We begin with the raw amino-acid sequence, 222 residues long: GEM-like protein 4 (222 aa).

A GRAM domain is found at 95–173 (KIFKRLFRVS…CKIDRVNQSQ (79 aa)).

The protein belongs to the GEM family.

The protein is GEM-like protein 4 of Arabidopsis thaliana (Mouse-ear cress).